Here is a 722-residue protein sequence, read N- to C-terminus: MAEYLRLPHSLAMIRLCNPPVNAVSPTVIREVRNGLQKAGSDHTVKAIVICGANGNFCAGADIHGFSAFTPGLALGSLVDEIQRYQKPVLAAIQGVALGGGLELALGCHYRIANAKARVGLPEVTLGILPGARGTQLLPRVVGVPVALDLITSGKYLSADEALRLGILDAVVKSDPVEEAIKFAQKIIDKPIEPRRIFNKPVPSLPNMDSVFAEAIAKVRKQYPGVLAPETCVRSIQASVKHPYEVGIKEEEKLFMYLRASGQAKALQYAFFAEKSANKWSTPSGASWKTASAQPVSSVGVLGLGTMGRGIAISFARVGISVVAVESDPKQLDAAKKIITFTLEKEASRAHQNGQASAKPKLRFSSSTKELSTVDLVVEAVFEDMNLKKKVFAELSALCKPGAFLCTNTSALNVDDIASSTDRPQLVIGTHFFSPAHVMRLLEVIPSRYSSPTTIATVMSLSKKIGKIGVVVGNCYGFVGNRMLAPYYNQGFFLLEEGSKPEDVDGVLEEFGFKMGPFRVSDLAGLDVGWKIRKGQGLTGPSLPPGTPVRKRGNSRYSPLGDMLCEAGRFGQKTGKGWYQYDKPLGRIHKPDPWLSTFLSQYREVHHIEQRTISKEEILERCLYSLINEAFRILEEGMAARPEHIDVIYLHGYGWPRHKGGPMFYAASVGLPTVLEKLQKYYRQNPDIPQLEPSDYLRRLVAQGSPPLKEWQSLAGPHGSKL.

The segment at 1 to 281 (MAEYLRLPHS…FAEKSANKWS (281 aa)) is enoyl-CoA hydratase / isomerase. A2 carries the post-translational modification Blocked amino end (Ala). K38 bears the N6-succinyllysine mark. G100 contacts substrate. Residue K173 is modified to N6-acetyllysine; alternate. Residue K173 is modified to N6-succinyllysine; alternate. Residue K182 is modified to N6-succinyllysine. Residues K190 and K218 each carry the N6-acetyllysine; alternate modification. An N6-succinyllysine; alternate mark is found at K190 and K218. K241 carries the post-translational modification N6-succinyllysine. Residue K249 is modified to N6-acetyllysine. K253 carries the post-translational modification N6-succinyllysine. At K275 the chain carries N6-acetyllysine; alternate. N6-succinyllysine; alternate is present on K275. K279, K289, and K330 each carry N6-succinyllysine. Residues 282–571 (TPSGASWKTA…DMLCEAGRFG (290 aa)) form a 3-hydroxyacyl-CoA dehydrogenase region. An N6-acetyllysine mark is found at K345, K359, and K463. K531 carries the post-translational modification N6-succinyllysine. Residue T547 is modified to Phosphothreonine. At K576 the chain carries N6-succinyllysine. N6-acetyllysine; alternate occurs at positions 583, 590, and 709. An N6-succinyllysine; alternate mark is found at K583, K590, and K709. Positions 720 to 722 (SKL) match the Microbody targeting signal motif. K721 carries the post-translational modification N6-succinyllysine.

In the N-terminal section; belongs to the enoyl-CoA hydratase/isomerase family. This sequence in the C-terminal section; belongs to the 3-hydroxyacyl-CoA dehydrogenase family. Monomer. In terms of processing, acetylated, leading to enhanced enzyme activity. Acetylation is enhanced by up to 80% after treatment either with trichostin A (TCA) or with nicotinamide (NAM) with highest increase on Lys-345. Acetylation and enzyme activity increased by about 1.5% on addition of fatty acids.

It is found in the peroxisome. The catalysed reaction is a (3S)-3-hydroxyacyl-CoA = a (2E)-enoyl-CoA + H2O. It carries out the reaction a 4-saturated-(3S)-3-hydroxyacyl-CoA = a (3E)-enoyl-CoA + H2O. It catalyses the reaction a (3Z)-enoyl-CoA = a 4-saturated (2E)-enoyl-CoA. The enzyme catalyses a (3E)-enoyl-CoA = a 4-saturated (2E)-enoyl-CoA. The catalysed reaction is a (3S)-3-hydroxyacyl-CoA + NAD(+) = a 3-oxoacyl-CoA + NADH + H(+). It carries out the reaction (2S,3S)-3-hydroxy-2-methylbutanoyl-CoA = (2E)-2-methylbut-2-enoyl-CoA + H2O. It catalyses the reaction (3E,5Z)-tetradecadienoyl-CoA = (2E,5Z)-tetradecadienoyl-CoA. The enzyme catalyses (3E,5Z)-octadienoyl-CoA = (2E,5Z)-octadienoyl-CoA. The catalysed reaction is (3S)-hydroxydecanoyl-CoA + NAD(+) = 3-oxodecanoyl-CoA + NADH + H(+). It carries out the reaction (3E)-decenoyl-CoA = (2E)-decenoyl-CoA. It catalyses the reaction (3Z)-hexenoyl-CoA = (2E)-hexenoyl-CoA. The enzyme catalyses (3E)-hexenoyl-CoA = (2E)-hexenoyl-CoA. The catalysed reaction is (3S)-hydroxydecanoyl-CoA = (2E)-decenoyl-CoA + H2O. It carries out the reaction (3S)-hydroxyhexanoyl-CoA = (2E)-hexenoyl-CoA + H2O. It catalyses the reaction (3S)-hydroxyhexadecanoyl-CoA + NAD(+) = 3-oxohexadecanoyl-CoA + NADH + H(+). The enzyme catalyses (3S)-hydroxyhexadecanoyl-CoA = (2E)-hexadecenoyl-CoA + H2O. The catalysed reaction is (2E)-hexadecenedioyl-CoA + H2O = (3S)-hydroxyhexadecanedioyl-CoA. It carries out the reaction (3S)-hydroxyhexadecanedioyl-CoA + NAD(+) = 3-oxohexadecanedioyl-CoA + NADH + H(+). It participates in lipid metabolism; fatty acid beta-oxidation. Its activity is regulated as follows. Enzyme activity enhanced by acetylation. In terms of biological role, peroxisomal trifunctional enzyme possessing 2-enoyl-CoA hydratase, 3-hydroxyacyl-CoA dehydrogenase, and delta 3, delta 2-enoyl-CoA isomerase activities. Catalyzes two of the four reactions of the long chain fatty acids peroxisomal beta-oxidation pathway. Can also use branched-chain fatty acids such as 2-methyl-2E-butenoyl-CoA as a substrate, which is hydrated into (2S,3S)-3-hydroxy-2-methylbutanoyl-CoA. Optimal isomerase for 2,5 double bonds into 3,5 form isomerization in a range of enoyl-CoA species. Also able to isomerize both 3-cis and 3-trans double bonds into the 2-trans form in a range of enoyl-CoA species. Regulates the amount of medium-chain dicarboxylic fatty acids which are essential regulators of all fatty acid oxidation pathways. Also involved in the degradation of long-chain dicarboxylic acids through peroxisomal beta-oxidation. In Rattus norvegicus (Rat), this protein is Peroxisomal bifunctional enzyme.